A 239-amino-acid chain; its full sequence is Lactate utilization protein A (239 aa).

Belongs to the LutA/YkgE family.

Its function is as follows. Is involved in L-lactate degradation and allows cells to grow with lactate as the sole carbon source. This chain is Lactate utilization protein A, found in Geobacillus kaustophilus (strain HTA426).